The chain runs to 764 residues: Sesterfisherol synthase (764 aa).

The interval 2 to 331 is terpene cyclase; that stretch reads EVWEHSRPIA…SPRHHAWRNN (330 aa). Residue Asp95 coordinates Mg(2+). Residues Asp95, 187 to 190, Asn231, 235 to 239, and 324 to 325 contribute to the substrate site; these read RRDD, SFDRE, and RH. A DDXXD 1 motif is present at residues 95 to 99; that stretch reads DDGYE. The short motif at 231-239 is the NSE/DTE element; the sequence is NDYWSFDRE. A prenyltransferase region spans residues 332 to 759; the sequence is SRNGLKPANH…PMLRLLLEKL (428 aa). Residues 347–372 form a disordered region; it reads LITPSNNLNSSKGSEEQMQDSDNGTR. Residues 348–358 are compositionally biased toward polar residues; the sequence is ITPSNNLNSSK. The isopentenyl diphosphate site is built by Lys476, Arg479, and His508. Asp515 and Asp519 together coordinate Mg(2+). The DDXXD 2 motif lies at 515-519; that stretch reads DDIED. A dimethylallyl diphosphate-binding site is contributed by Arg524. Residue Arg525 coordinates isopentenyl diphosphate. Dimethylallyl diphosphate-binding residues include Lys602, Thr603, Gln638, Asn645, Lys655, and Lys665.

This sequence in the N-terminal section; belongs to the terpene synthase family. It in the C-terminal section; belongs to the FPP/GGPP synthase family. As to quaternary structure, hexamer. Mg(2+) serves as cofactor.

It catalyses the reaction isopentenyl diphosphate + (2E,6E)-farnesyl diphosphate = (2E,6E,10E)-geranylgeranyl diphosphate + diphosphate. It carries out the reaction isopentenyl diphosphate + (2E,6E,10E)-geranylgeranyl diphosphate = (2E,6E,10E,14E)-geranylfarnesyl diphosphate + diphosphate. The catalysed reaction is (2E,6E,10E,14E)-geranylfarnesyl diphosphate + H2O = sesterfisherol + diphosphate. It functions in the pathway secondary metabolite biosynthesis; terpenoid biosynthesis. In terms of biological role, bifunctional terpene synthase; part of the gene cluster that mediates the biosynthesis of sesterfisheric acid. The bifunctional terpene synthase NfSS converts dimethylallyl diphosphate (DMAPP) and isopentenyl diphosphate (IPP) into sesterfisherol. The C-terminal prenyltransferase (PT) domain of NfSS catalyzes formation of geranylfarnesyl pyrophosphate (GFPP), whereas the N-terminal terpene cyclase (TC) domain catalyzes the cyclization of GFPP to sesterfisherol. The cytochrome P450 monooxygenase NfP450 then catalyzes oxidative modifications of sesterfisherol into sesterfisheric acid. This chain is Sesterfisherol synthase, found in Neosartorya fischeri (strain ATCC 1020 / DSM 3700 / CBS 544.65 / FGSC A1164 / JCM 1740 / NRRL 181 / WB 181) (Aspergillus fischerianus).